The chain runs to 108 residues: uncharacterized protein (108 aa).

This is an uncharacterized protein from Autographa californica nuclear polyhedrosis virus (AcMNPV).